A 317-amino-acid chain; its full sequence is Putative toluene-4-sulfonate monooxygenase system reductase subunit TsaB2 (317 aa).

An FAD-binding FR-type domain is found at 4 to 106 (DVPVTVAAVR…SAPRNLFEMA (103 aa)). 110–220 (RRVLLLAGGI…PGSVRMERFK (111 aa)) serves as a coordination point for NAD(+). The 2Fe-2S ferredoxin-type domain maps to 232–317 (FELVLQRAGL…CGGGRLVLDI (86 aa)). Residues Cys266, Cys271, and Cys274 each coordinate [2Fe-2S] cluster.

Monomer. Part of the p-toluenesulfonate methyl-monooxygenase complex TsaBM, comprising the reductase TsaB and the oxygenase TsaM. FMN is required as a cofactor.

Involved in the toluene-4-sulfonate degradation pathway. In Comamonas testosteroni (Pseudomonas testosteroni), this protein is Putative toluene-4-sulfonate monooxygenase system reductase subunit TsaB2 (tsaB2).